Here is a 258-residue protein sequence, read N- to C-terminus: Imidazole glycerol phosphate synthase subunit HisF (258 aa).

Active-site residues include Asp11 and Asp130.

The protein belongs to the HisA/HisF family. Heterodimer of HisH and HisF.

Its subcellular location is the cytoplasm. It carries out the reaction 5-[(5-phospho-1-deoxy-D-ribulos-1-ylimino)methylamino]-1-(5-phospho-beta-D-ribosyl)imidazole-4-carboxamide + L-glutamine = D-erythro-1-(imidazol-4-yl)glycerol 3-phosphate + 5-amino-1-(5-phospho-beta-D-ribosyl)imidazole-4-carboxamide + L-glutamate + H(+). Its pathway is amino-acid biosynthesis; L-histidine biosynthesis; L-histidine from 5-phospho-alpha-D-ribose 1-diphosphate: step 5/9. Functionally, IGPS catalyzes the conversion of PRFAR and glutamine to IGP, AICAR and glutamate. The HisF subunit catalyzes the cyclization activity that produces IGP and AICAR from PRFAR using the ammonia provided by the HisH subunit. The protein is Imidazole glycerol phosphate synthase subunit HisF of Escherichia coli O127:H6 (strain E2348/69 / EPEC).